Here is a 1235-residue protein sequence, read N- to C-terminus: ATP-dependent helicase/nuclease subunit A (1235 aa).

The UvrD-like helicase ATP-binding domain occupies 3-471; it reads TKWTETQKSA…IKLSENFRSR (469 aa). Residue 24–31 participates in ATP binding; it reads AGAGTGKT. One can recognise a UvrD-like helicase C-terminal domain in the interval 509 to 808; the sequence is PFEGNCGGDV…RIMSIHKSKG (300 aa).

Belongs to the helicase family. AddA subfamily. In terms of assembly, heterodimer of AddA and AddB/RexB. Mg(2+) serves as cofactor.

The catalysed reaction is Couples ATP hydrolysis with the unwinding of duplex DNA by translocating in the 3'-5' direction.. The enzyme catalyses ATP + H2O = ADP + phosphate + H(+). Functionally, the heterodimer acts as both an ATP-dependent DNA helicase and an ATP-dependent, dual-direction single-stranded exonuclease. Recognizes the chi site generating a DNA molecule suitable for the initiation of homologous recombination. The AddA nuclease domain is required for chi fragment generation; this subunit has the helicase and 3' -&gt; 5' nuclease activities. This is ATP-dependent helicase/nuclease subunit A from Clostridium kluyveri (strain ATCC 8527 / DSM 555 / NBRC 12016 / NCIMB 10680 / K1).